Reading from the N-terminus, the 276-residue chain is Foldase protein PrsA (276 aa).

A signal peptide spans 1–18 (MRKWMIVAAVAAVFGLSA). Cys19 carries N-palmitoyl cysteine lipidation. Residue Cys19 is the site of S-diacylglycerol cysteine attachment. One can recognise a PpiC domain in the interval 133–223 (KPKIRASHIL…YGYHIIKVTD (91 aa)).

Belongs to the PrsA family.

It localises to the cell membrane. It catalyses the reaction [protein]-peptidylproline (omega=180) = [protein]-peptidylproline (omega=0). In terms of biological role, plays a major role in protein secretion by helping the post-translocational extracellular folding of several secreted proteins. In Geobacillus sp. (strain WCH70), this protein is Foldase protein PrsA.